The sequence spans 422 residues: Steroid hormone receptor ERR1 (422 aa).

The interval 1 to 67 (MSSQVVGIEP…GAGPGEQGGG (67 aa)) is disordered. Residues serine 19 and serine 22 each carry the phosphoserine modification. The segment covering 58–67 (GAGPGEQGGG) has biased composition (gly residues). The segment at residues 76–151 (KRLCLVCGDV…VGMLKEGVRL (76 aa)) is a DNA-binding region (nuclear receptor). NR C4-type zinc fingers lie at residues 79–99 (CLVC…CEAC) and 115–134 (CPAS…CQAC). N6-acetyllysine; by PCAF/KAT2B is present on residues lysine 129, lysine 138, lysine 160, and lysine 162. Residues lysine 189 and lysine 402 each participate in a glycyl lysine isopeptide (Lys-Gly) (interchain with G-Cter in SUMO2) cross-link. Positions 192-420 (PVNALVSHLL…KLFLEMLEAM (229 aa)) constitute an NR LBD domain.

It belongs to the nuclear hormone receptor family. NR3 subfamily. In terms of assembly, binds DNA as a monomer or a homodimer. Interacts (via the AF2 domain) with coactivator PPARGC1A (via the L3 motif); the interaction greatly enhances transcriptional activity of genes involved in energy metabolism. Interacts with PIAS4; the interaction enhances sumoylation. Interacts with MAPK15; promotes re-localization of ESRRA to the cytoplasm through a XPO1-dependent mechanism then inhibits ESRRA transcriptional activity. Phosphorylation on Ser-19 enhances sumoylation on Lys-14 increasing repression of transcriptional activity. In terms of processing, sumoylated with SUMO2. Main site is Lys-14 which is enhanced by phosphorylation on Ser-19, cofactor activation, and by interaction with PIAS4. Sumoylation enhances repression of transcriptional activity, but has no effect on subcellular location nor on DNA binding. Post-translationally, reversibly acetylated. Acetylation by PCAF/KAT2 at Lys-129, Lys-138, Lys-160 and Lys-162 and PCAF/KAT2 decreases transcriptional activity probably by inhibiting DNA-binding activity; deacetylation involves SIRT1 and HDAC8 and increases DNA-binding.

It is found in the nucleus. The protein localises to the cytoplasm. Functionally, binds to an ERR-alpha response element (ERRE) containing a single consensus half-site, 5'-TNAAGGTCA-3'. Can bind to the medium-chain acyl coenzyme A dehydrogenase (MCAD) response element NRRE-1 and may act as an important regulator of MCAD promoter. May function as a modulator of the estrogen signaling pathway in the uterus. Induces the expression of PERM1 in the skeletal muscle. The protein is Steroid hormone receptor ERR1 (ESRRA) of Canis lupus familiaris (Dog).